Reading from the N-terminus, the 374-residue chain is DNA replication and repair protein RecF (374 aa).

30 to 37 lines the ATP pocket; that stretch reads GENAQGKT.

This sequence belongs to the RecF family.

Its subcellular location is the cytoplasm. Its function is as follows. The RecF protein is involved in DNA metabolism; it is required for DNA replication and normal SOS inducibility. RecF binds preferentially to single-stranded, linear DNA. It also seems to bind ATP. In Pediococcus pentosaceus (strain ATCC 25745 / CCUG 21536 / LMG 10740 / 183-1w), this protein is DNA replication and repair protein RecF.